We begin with the raw amino-acid sequence, 386 residues long: ORC1-type DNA replication protein 3 (386 aa).

Residues 65-69 (TGKTF) and Tyr206 contribute to the ATP site.

The protein belongs to the CDC6/cdc18 family.

Involved in regulation of DNA replication. This is ORC1-type DNA replication protein 3 (cdc6-3) from Sulfurisphaera tokodaii (strain DSM 16993 / JCM 10545 / NBRC 100140 / 7) (Sulfolobus tokodaii).